Consider the following 122-residue polypeptide: Large ribosomal subunit protein uL14 (122 aa).

This sequence belongs to the universal ribosomal protein uL14 family. As to quaternary structure, part of the 50S ribosomal subunit. Forms a cluster with proteins L3 and L19. In the 70S ribosome, L14 and L19 interact and together make contacts with the 16S rRNA in bridges B5 and B8.

In terms of biological role, binds to 23S rRNA. Forms part of two intersubunit bridges in the 70S ribosome. The polypeptide is Large ribosomal subunit protein uL14 (Phenylobacterium zucineum (strain HLK1)).